The chain runs to 93 residues: Protein ea8.5 (93 aa).

The polypeptide is Protein ea8.5 (ea8.5) (Escherichia phage lambda (Bacteriophage lambda)).